A 1001-amino-acid chain; its full sequence is O-GlcNAcase NagJ (1001 aa).

The signal sequence occupies residues 1-30; sequence MKRKMLKRLLTSAFACMFIANGLITTTVRA. The interval 179–469 is catalytic domain; that stretch reads VSARGIVEGF…WNRAIDMLYG (291 aa). The GH84 domain maps to 180–452; the sequence is SARGIVEGFY…TAADYSWNMD (273 aa). A protein-binding residues include G187, K218, and D297. Residue D298 is the Proton donor of the active site. A protein contacts are provided by residues Y335, 394-396, D401, and N429; that span reads WWN. Coiled-coil stretches lie at residues 515–543 and 573–597; these read KEDASALIEELYGEFARMEEACNNLKANL and VAQLNEDTEAYESAKEIAQNKLNTA. The region spanning 916–1001 is the Fibronectin type-III domain; the sequence is PVRDFKASEI…KESLTLRTAR (86 aa).

It belongs to the glycosyl hydrolase 84 family.

It carries out the reaction 3-O-(N-acetyl-beta-D-glucosaminyl)-L-seryl-[protein] + H2O = N-acetyl-D-glucosamine + L-seryl-[protein]. The enzyme catalyses 3-O-(N-acetyl-beta-D-glucosaminyl)-L-threonyl-[protein] + H2O = L-threonyl-[protein] + N-acetyl-D-glucosamine. With respect to regulation, inhibited by O-(2-acetamido-2-deoxy-D-glucopyranosylidene)amino-N-phenyl-carbamate (PUGNAc) and streptozotocin. Functionally, binds carbohydrates. Capable of hydrolyzing the glycosidic link of O-GlcNAcylated proteins. Can bind and deglycosylate O-glycosylated peptides from mammals. In Clostridium perfringens (strain ATCC 13124 / DSM 756 / JCM 1290 / NCIMB 6125 / NCTC 8237 / Type A), this protein is O-GlcNAcase NagJ (nagJ).